Consider the following 317-residue polypeptide: Melanocyte-stimulating hormone receptor (317 aa).

Topologically, residues 1 to 37 are extracellular; it reads MPALGSQRRLLGSLNCTPPATLPFTLAPNRTGPQCLE. A glycan (N-linked (GlcNAc...) asparagine) is linked at Asn-29. The helical transmembrane segment at 38–63 threads the bilayer; that stretch reads VSIPDGLFLSLGLVSLVENVLVVAAI. Residues 64 to 72 are Cytoplasmic-facing; it reads AKNRNLHSP. The helical transmembrane segment at 73-93 threads the bilayer; the sequence is MYYFICCLAVSDLLVSVSNVL. Topologically, residues 94-118 are extracellular; it reads ETAVMLLLEAGVLATQAAVVQQLDN. A helical transmembrane segment spans residues 119–140; the sequence is VIDVLICGSMVSSLCFLGAIAV. At 141-163 the chain is on the cytoplasmic side; sequence DRYISIFYALRYHSVVTLPRAWR. A helical membrane pass occupies residues 164–183; sequence IIAAIWVASILTSLLFITYY. Over 184-191 the chain is Extracellular; sequence NHKVILLC. The helical transmembrane segment at 192 to 211 threads the bilayer; it reads LVGLFIAMLALMAVLYVHML. Topologically, residues 212–240 are cytoplasmic; sequence ARACQHARGIARLQKRQRPIHQGFGLKGA. Residues 241 to 266 form a helical membrane-spanning segment; sequence ATLTILLGVFFLCWGPFFLHLSLIVL. Over 267–279 the chain is Extracellular; it reads CPQHPTCGCIFKN. A helical transmembrane segment spans residues 280 to 300; that stretch reads FNLFLALIICNAIVDPLIYAF. Residues 301 to 317 are Cytoplasmic-facing; the sequence is RSQELRKTLQEVLQCSW. Cys-315 carries S-palmitoyl cysteine lipidation.

It belongs to the G-protein coupled receptor 1 family. In terms of assembly, interacts with MGRN1, but does not undergo MGRN1-mediated ubiquitination; this interaction competes with GNAS-binding and thus inhibits agonist-induced cAMP production. Interacts with OPN3; the interaction results in a decrease in MC1R-mediated cAMP signaling and ultimately a decrease in melanin production in melanocytes. As to expression, highly expressed in the testis.

It is found in the cell membrane. Its function is as follows. Receptor for MSH (alpha, beta) and ACTH. Does not seem to be active with gamma-MSH. The activity of this receptor is mediated by G proteins which activate adenylate cyclase. Mediates melanogenesis, the production of eumelanin (black/brown) and phaeomelanin (red/yellow), via regulation of cAMP signaling in melanocytes. The sequence is that of Melanocyte-stimulating hormone receptor (MC1R) from Bos taurus (Bovine).